The following is a 619-amino-acid chain: MFVPRSLKIKRNANDDGKSCVAKIIKPDPEDLQLDKSRDVPVDAVATEAATIDRHISESCPFPSPGGQLAEVHSVSPEQGAKDSHPSEEPVKSFSKTQRWAEPGEPICVVCGRYGEYICDKTDEDVCSLECKAKHLLQVKEKEEKSKLSNPQKADSEPESPLNASYVYKEHPFILNLQEDQIENLKQQLGILVQGQEVTRPIIDFEHCSLPEVLNHNLKKSGYEVPTPIQMQMIPVGLLGRDILASADTGSGKTAAFLLPVIMRALFESKTPSALILTPTRELAIQIERQAKELMSGLPRMKTVLLVGGLPLPPQLYRLQQHVKVIIATPGRLLDIIKQSSVELCGVKIVVVDEADTMLKMGFQQQVLDILENIPNDCQTILVSATIPTSIEQLASQLLHNPVRIITGEKNLPCANVRQIILWVEDPAKKKKLFEILNDKKLFKPPVLVFVDCKLGADLLSEAVQKITGLKSISIHSEKSQIERKNILKGLLEGDYEVVVSTGVLGRGLDLISVRLVVNFDMPSSMDEYVHQIGRVGRLGQNGTAITFINNNSKRLFWDIAKRVKPTGSILPPQLLNSPYLHDQKRKEQQKDKQTQNDLVTGANLMDIIRKHDKSNSQK.

Residue Lys-26 forms a Glycyl lysine isopeptide (Lys-Gly) (interchain with G-Cter in SUMO2) linkage. The segment at 57–98 is disordered; it reads SESCPFPSPGGQLAEVHSVSPEQGAKDSHPSEEPVKSFSKTQ. A phosphoserine mark is found at Ser-64 and Ser-76. Residues 80–91 are compositionally biased toward basic and acidic residues; sequence GAKDSHPSEEPV. An HIT-type zinc finger spans residues 104–133; sequence GEPICVVCGRYGEYICDKTDEDVCSLECKA. A disordered region spans residues 142–161; it reads KEEKSKLSNPQKADSEPESP. Residues Ser-156 and Ser-160 each carry the phosphoserine modification. The short motif at 203 to 231 is the Q motif element; sequence IDFEHCSLPEVLNHNLKKSGYEVPTPIQM. The 172-residue stretch at 234-405 folds into the Helicase ATP-binding domain; that stretch reads IPVGLLGRDI…SQLLHNPVRI (172 aa). Residue 247–254 participates in ATP binding; sequence ADTGSGKT. The short motif at 353–356 is the DEAD box element; that stretch reads DEAD. In terms of domain architecture, Helicase C-terminal spans 416 to 579; the sequence is NVRQIILWVE…ILPPQLLNSP (164 aa).

This sequence belongs to the DEAD box helicase family. DDX59 subfamily. In terms of assembly, interacts (via HIT-type zinc finger) with the RUVBL1/RUVBL2 complex in the presence of ADP. Expressed in fibroblasts (at protein level).

The protein resides in the cytoplasm. Its subcellular location is the nucleus. The enzyme catalyses ATP + H2O = ADP + phosphate + H(+). This Homo sapiens (Human) protein is Probable ATP-dependent RNA helicase DDX59 (DDX59).